A 569-amino-acid polypeptide reads, in one-letter code: Glutamate--tRNA ligase (569 aa).

A 'HIGH' region motif is present at residues 108–118 (PNPDFVLHLGS).

It belongs to the class-I aminoacyl-tRNA synthetase family. Glutamate--tRNA ligase type 2 subfamily.

The protein resides in the cytoplasm. It carries out the reaction tRNA(Glu) + L-glutamate + ATP = L-glutamyl-tRNA(Glu) + AMP + diphosphate. Catalyzes the attachment of glutamate to tRNA(Glu) in a two-step reaction: glutamate is first activated by ATP to form Glu-AMP and then transferred to the acceptor end of tRNA(Glu). In Thermofilum pendens (strain DSM 2475 / Hrk 5), this protein is Glutamate--tRNA ligase.